The following is a 202-amino-acid chain: Ribosome biogenesis regulatory protein homolog (202 aa).

Residues 82 to 103 (TLPPPTTPLPREKPVPQPKPET) are disordered.

This sequence belongs to the RRS1 family. As to quaternary structure, component of a hexameric 5S RNP precursor complex, composed of 5S RNA, RRS1, RPF2, RPL5, RPL11 and SYO1; this complex acts as a precursor for ribosome assembly.

The protein localises to the nucleus. Functionally, involved in ribosomal large subunit assembly. This is Ribosome biogenesis regulatory protein homolog from Chaetomium thermophilum (strain DSM 1495 / CBS 144.50 / IMI 039719) (Thermochaetoides thermophila).